The following is a 329-amino-acid chain: Phosphate import ATP-binding protein PstB (329 aa).

An ABC transporter domain is found at 83 to 325 (FEIENLNFWY…PKQKETNRYI (243 aa)). 116–123 (GKSGCGKS) provides a ligand contact to ATP.

This sequence belongs to the ABC transporter superfamily. Phosphate importer (TC 3.A.1.7) family. The complex is composed of two ATP-binding proteins (PstB), two transmembrane proteins (PstC and PstA) and a solute-binding protein (PstS).

It is found in the cell membrane. It carries out the reaction phosphate(out) + ATP + H2O = ADP + 2 phosphate(in) + H(+). Functionally, part of the ABC transporter complex PstSACB involved in phosphate import. Responsible for energy coupling to the transport system. The chain is Phosphate import ATP-binding protein PstB from Mycoplasma pneumoniae (strain ATCC 29342 / M129 / Subtype 1) (Mycoplasmoides pneumoniae).